Reading from the N-terminus, the 1427-residue chain is DNA-directed RNA polymerase subunit beta' (1427 aa).

4 residues coordinate Zn(2+): cysteine 66, cysteine 68, cysteine 81, and cysteine 84. Aspartate 472, aspartate 474, and aspartate 476 together coordinate Mg(2+). Zn(2+)-binding residues include cysteine 815, cysteine 889, cysteine 896, and cysteine 899.

This sequence belongs to the RNA polymerase beta' chain family. In terms of assembly, the RNAP catalytic core consists of 2 alpha, 1 beta, 1 beta' and 1 omega subunit. When a sigma factor is associated with the core the holoenzyme is formed, which can initiate transcription. It depends on Mg(2+) as a cofactor. Zn(2+) is required as a cofactor.

The catalysed reaction is RNA(n) + a ribonucleoside 5'-triphosphate = RNA(n+1) + diphosphate. In terms of biological role, DNA-dependent RNA polymerase catalyzes the transcription of DNA into RNA using the four ribonucleoside triphosphates as substrates. This Bacteroides fragilis (strain YCH46) protein is DNA-directed RNA polymerase subunit beta'.